Consider the following 208-residue polypeptide: GTP-binding protein Rho1 (208 aa).

A GTP-binding site is contributed by 19–26 (GDGACGKT). Positions 41–49 (YVPTVFDNY) match the Effector region motif. GTP contacts are provided by residues 66-70 (DTAGQ) and 124-127 (CKAD). The tract at residues 188–208 (GKQGKSKPKTKSSKKKKCVVL) is disordered. Residues 191-208 (GKSKPKTKSSKKKKCVVL) show a composition bias toward basic residues. Cys205 carries the cysteine methyl ester modification. The S-geranylgeranyl cysteine moiety is linked to residue Cys205. The propeptide at 206-208 (VVL) is removed in mature form.

This sequence belongs to the small GTPase superfamily. Rho family.

It is found in the cell membrane. This Kluyveromyces lactis (strain ATCC 8585 / CBS 2359 / DSM 70799 / NBRC 1267 / NRRL Y-1140 / WM37) (Yeast) protein is GTP-binding protein Rho1 (RHO1).